Reading from the N-terminus, the 309-residue chain is MKNEMNYYEISREEWRYFHGRGEKYTAITDDELQQVSGLNDRISLTDVSDIYVPLRHLLQMKYEQFRENQIKQSEFLEIKPHKTPFIIGIAGSVAVGKSTTARLLQLLLSRVYPDKTVQMITTDGFLYSTSELKQKGILDKKGFPESYDMPQLISFLNAVKNNVAPVKAPKYSHQIYDIIPDEFDIIDDPDILIVEGINVLQLPTTEQIYVSDFFDFSVYVDANPSLIEKWFLERFDLLLDLAKDDPTNYYYPYAISDRASAFKMARRVWRDIDLRNLNDYILPTRNRADLILHKTKHHLIDKVFLRKY.

92–99 contacts ATP; the sequence is GSVAVGKS.

The protein belongs to the prokaryotic pantothenate kinase family.

It localises to the cytoplasm. The enzyme catalyses (R)-pantothenate + ATP = (R)-4'-phosphopantothenate + ADP + H(+). The protein operates within cofactor biosynthesis; coenzyme A biosynthesis; CoA from (R)-pantothenate: step 1/5. The protein is Pantothenate kinase of Latilactobacillus sakei subsp. sakei (strain 23K) (Lactobacillus sakei subsp. sakei).